We begin with the raw amino-acid sequence, 1317 residues long: Immunoglobulin superfamily member 1 (1317 aa).

The first 20 residues, 1–20 (MMLRTFTLLLLCIWLNPGMT), serve as a signal peptide directing secretion. Ig-like C2-type domains are found at residues 21 to 112 (SLAV…KILE), 114 to 211 (EAPG…KLVV), 216 to 302 (PKPT…SDIL), 311 to 398 (PKTW…ATYN), and 400 to 481 (VELM…HRSK). Residues 21-499 (SLAVESQPEL…GFLTWNSILN (479 aa)) are Extracellular-facing. Asn43 carries N-linked (GlcNAc...) asparagine glycosylation. Cys48 and Cys96 are joined by a disulfide. A disulfide bond links Cys238 and Cys286. N-linked (GlcNAc...) asparagine glycans are attached at residues Asn328 and Asn371. 2 disulfides stabilise this stretch: Cys333–Cys382 and Cys422–Cys465. A helical transmembrane segment spans residues 500–520 (EAVRVSLTMQLASLLLLVVWI). The Cytoplasmic segment spans residues 521 to 531 (RWKCRRLRLRE). A helical transmembrane segment spans residues 532 to 552 (AWLLGTAQGVAMLFILMALLC). Residues 553 to 1317 (CGLCNGALTE…EVSVELTVPI (765 aa)) are Extracellular-facing. Ig-like C2-type domains lie at 570-658 (TPKP…ALEL), 659-753 (VGTD…ELVI), 758-850 (PKPF…LVVT), 854-938 (PKPT…SSLS), 946-1041 (TDTF…ELIV), 1046-1131 (PKPS…NHSN), and 1142-1223 (PKPS…EPSD). A disulfide bridge links Cys780 with Cys830. The N-linked (GlcNAc...) asparagine glycan is linked to Asn871. Cysteines 876 and 923 form a disulfide. N-linked (GlcNAc...) asparagine glycosylation is found at Asn967 and Asn1063. 2 cysteine pairs are disulfide-bonded: Cys1068–Cys1115 and Cys1164–Cys1207. Positions 1290-1310 (NQEGEPGTTTNSPSSASQEVS) are disordered. The segment covering 1296–1309 (GTTTNSPSSASQEV) has biased composition (polar residues).

As to quaternary structure, interacts with INHA; the interaction is not confirmed by standard receptor binding assays. Interacts with ACVR1B; the interaction appears to be ligand-dependent as it is diminished by inhibin B and activin A. Interacts with ACVR2A, ACVR2B, ACVRL1 and BMPR1B. Interacts with HECTD1.

The protein localises to the membrane. It localises to the secreted. In terms of biological role, seems to be a coreceptor in inhibin signaling, but seems not to be a high-affinity inhibin receptor. Antagonizes activin A signaling in the presence or absence of inhibin B. Necessary to mediate a specific antagonistic effect of inhibin B on activin-stimulated transcription. The polypeptide is Immunoglobulin superfamily member 1 (Igsf1) (Mus musculus (Mouse)).